A 423-amino-acid chain; its full sequence is Glucose-1-phosphate adenylyltransferase (423 aa).

Alpha-D-glucose 1-phosphate contacts are provided by residues tyrosine 107, glycine 172, 187–188 (EK), and serine 205.

Belongs to the bacterial/plant glucose-1-phosphate adenylyltransferase family. In terms of assembly, homotetramer.

The enzyme catalyses alpha-D-glucose 1-phosphate + ATP + H(+) = ADP-alpha-D-glucose + diphosphate. It functions in the pathway glycan biosynthesis; glycogen biosynthesis. Functionally, involved in the biosynthesis of ADP-glucose, a building block required for the elongation reactions to produce glycogen. Catalyzes the reaction between ATP and alpha-D-glucose 1-phosphate (G1P) to produce pyrophosphate and ADP-Glc. This is Glucose-1-phosphate adenylyltransferase from Albidiferax ferrireducens (strain ATCC BAA-621 / DSM 15236 / T118) (Rhodoferax ferrireducens).